A 435-amino-acid polypeptide reads, in one-letter code: ATP-dependent protease ATPase subunit HslU (435 aa).

ATP is bound by residues valine 18, 60–65 (GVGKTE), aspartate 248, glutamate 313, and arginine 385.

The protein belongs to the ClpX chaperone family. HslU subfamily. A double ring-shaped homohexamer of HslV is capped on each side by a ring-shaped HslU homohexamer. The assembly of the HslU/HslV complex is dependent on binding of ATP.

Its subcellular location is the cytoplasm. In terms of biological role, ATPase subunit of a proteasome-like degradation complex; this subunit has chaperone activity. The binding of ATP and its subsequent hydrolysis by HslU are essential for unfolding of protein substrates subsequently hydrolyzed by HslV. HslU recognizes the N-terminal part of its protein substrates and unfolds these before they are guided to HslV for hydrolysis. This Xanthobacter autotrophicus (strain ATCC BAA-1158 / Py2) protein is ATP-dependent protease ATPase subunit HslU.